The primary structure comprises 326 residues: Glyoxylate/hydroxypyruvate reductase B (326 aa).

Residues R237 and E266 contribute to the active site. H285 (proton donor) is an active-site residue.

The protein belongs to the D-isomer specific 2-hydroxyacid dehydrogenase family. GhrB subfamily. Homodimer.

It localises to the cytoplasm. It carries out the reaction glycolate + NADP(+) = glyoxylate + NADPH + H(+). The catalysed reaction is (R)-glycerate + NAD(+) = 3-hydroxypyruvate + NADH + H(+). The enzyme catalyses (R)-glycerate + NADP(+) = 3-hydroxypyruvate + NADPH + H(+). Its function is as follows. Catalyzes the NADPH-dependent reduction of glyoxylate and hydroxypyruvate into glycolate and glycerate, respectively. This chain is Glyoxylate/hydroxypyruvate reductase B, found in Yersinia pestis bv. Antiqua (strain Nepal516).